The primary structure comprises 1008 residues: RNA cytidine acetyltransferase (1008 aa).

ATP-binding positions include 282–291 and Arg-443; that span reads GRGKSAALGL. The N-acetyltransferase domain occupies 531–713; it reads CLLGPVQRMD…VPVYLSQKSN (183 aa). Residues 601–603, 608–614, and Asn-700 contribute to the acetyl-CoA site; these read VAT and QRMGYGK. Ser-907 carries the phosphoserine modification. The disordered stretch occupies residues 950–1008; the sequence is ALETNGTGGGSGLLSVKSGVKRLDGPIETREDGDLAAPLSKKKKKNNPKQRRSQGKSLI. Over residues 970–982 the composition is skewed to basic and acidic residues; that stretch reads KRLDGPIETREDG. A compositionally biased stretch (basic residues) spans 989 to 1008; that stretch reads SKKKKKNNPKQRRSQGKSLI.

This sequence belongs to the RNA cytidine acetyltransferase family. NAT10 subfamily. As to quaternary structure, component of the PRC1 complex (PSC, PC, PH and dRING1) in 0-12 hours Drosophila embryos. This complex is distinct from the Esc/E(z) complex, which contains many other PcG proteins like Esc, E(z), Su(z)12, HDAC1/Rpd3, Caf1-55 and probably Pho. The two complexes however cooperate and interact together during the first 3 hours of development to establish PcG silencing. Part of the small subunit (SSU) processome, composed of more than 70 proteins and the RNA chaperone small nucleolar RNA (snoRNA) U3.

The protein localises to the nucleus. It is found in the nucleolus. It carries out the reaction a cytidine in 18S rRNA + acetyl-CoA + ATP + H2O = an N(4)-acetylcytidine in 18S rRNA + ADP + phosphate + CoA + H(+). The catalysed reaction is a cytidine in tRNA + acetyl-CoA + ATP + H2O = an N(4)-acetylcytidine in tRNA + ADP + phosphate + CoA + H(+). Its function is as follows. RNA cytidine acetyltransferase with specificity toward both 18S rRNA and tRNAs. Catalyzes the formation of N(4)-acetylcytidine (ac4C) in 18S rRNA. Required for early nucleolar cleavages of precursor rRNA at sites A0, A1 and A2 during 18S rRNA synthesis. Catalyzes the formation of ac4C in serine and leucine tRNAs. Requires a tRNA-binding adapter protein for full tRNA acetyltransferase activity but not for 18S rRNA acetylation. Polycomb group (PcG) protein. PcG proteins act by forming multiprotein complexes, which are required to maintain the transcriptionally repressive state of homeotic genes throughout development. PcG proteins are not required to initiate repression, but to maintain it during later stages of development. They probably act via the methylation of histones, rendering chromatin heritably changed in its expressibility. Part of the small subunit (SSU) processome, first precursor of the small eukaryotic ribosomal subunit. During the assembly of the SSU processome in the nucleolus, many ribosome biogenesis factors, an RNA chaperone and ribosomal proteins associate with the nascent pre-rRNA and work in concert to generate RNA folding, modifications, rearrangements and cleavage as well as targeted degradation of pre-ribosomal RNA by the RNA exosome. The chain is RNA cytidine acetyltransferase (l(1)G0020) from Drosophila melanogaster (Fruit fly).